A 203-amino-acid chain; its full sequence is Secreted phosphoprotein 24 (203 aa).

The signal sequence occupies residues 1 to 23; sequence MEQAMLKTLALLVLGMHYWCATG. Cystine bridges form between C86/C96 and C109/C127. Phosphoserine is present on S90. A phosphoserine mark is found at S137, S138, S162, S165, and S174.

This sequence belongs to the SPP2 family. In terms of processing, phosphorylation sites are present in the extracellular medium.

The protein localises to the secreted. Could coordinate an aspect of bone turnover. In Mus musculus (Mouse), this protein is Secreted phosphoprotein 24 (Spp2).